The primary structure comprises 160 residues: MQISIFAVGRMKSGAEQKLVQHYLDRFSKSSGAVGFHLKKLQEIPESRAQTACQRMEEEGRKLIEFLPEKCQLIVLDERGESISSAAFAEKLGCYRDEGIRDVIIALGGPDGHNEQIRNRADFLLSFGFMTWPHQIARILLTEQLYRAVTIANHHPYHRF.

S-adenosyl-L-methionine-binding positions include L76, G108, and 127–132; that span reads FGFMTW.

Belongs to the RNA methyltransferase RlmH family. Homodimer.

It localises to the cytoplasm. It catalyses the reaction pseudouridine(1915) in 23S rRNA + S-adenosyl-L-methionine = N(3)-methylpseudouridine(1915) in 23S rRNA + S-adenosyl-L-homocysteine + H(+). In terms of biological role, specifically methylates the pseudouridine at position 1915 (m3Psi1915) in 23S rRNA. The sequence is that of Ribosomal RNA large subunit methyltransferase H from Bartonella tribocorum (strain CIP 105476 / IBS 506).